The chain runs to 88 residues: Small ribosomal subunit protein uS17 (88 aa).

This sequence belongs to the universal ribosomal protein uS17 family. As to quaternary structure, part of the 30S ribosomal subunit.

Its function is as follows. One of the primary rRNA binding proteins, it binds specifically to the 5'-end of 16S ribosomal RNA. This is Small ribosomal subunit protein uS17 from Pseudomonas putida (strain ATCC 700007 / DSM 6899 / JCM 31910 / BCRC 17059 / LMG 24140 / F1).